A 464-amino-acid polypeptide reads, in one-letter code: L-cystine uptake protein TcyP (464 aa).

The next 10 helical transmembrane spans lie at threonine 3 to methionine 23, valine 34 to proline 54, tyrosine 73 to phenylalanine 93, glycine 107 to alanine 127, proline 184 to valine 204, isoleucine 225 to methionine 245, phenylalanine 263 to alanine 283, alanine 347 to leucine 367, phenylalanine 371 to glycine 391, and phenylalanine 395 to isoleucine 415.

Belongs to the dicarboxylate/amino acid:cation symporter (DAACS) (TC 2.A.23) family.

The protein resides in the membrane. Mediates uptake of L-cystine, the oxidized form of L-cysteine. The polypeptide is L-cystine uptake protein TcyP (Bacillus cereus (strain ATCC 14579 / DSM 31 / CCUG 7414 / JCM 2152 / NBRC 15305 / NCIMB 9373 / NCTC 2599 / NRRL B-3711)).